The sequence spans 64 residues: Large ribosomal subunit protein bL35 (64 aa).

Positions 1–26 (MPKMKSHRGASKRFKRTASGKLKRSH) are enriched in basic residues. The interval 1 to 42 (MPKMKSHRGASKRFKRTASGKLKRSHAYTSHLFANKSTKAKR) is disordered.

This sequence belongs to the bacterial ribosomal protein bL35 family.

This Exiguobacterium sp. (strain ATCC BAA-1283 / AT1b) protein is Large ribosomal subunit protein bL35.